Consider the following 164-residue polypeptide: Transcriptional regulator MraZ (164 aa).

SpoVT-AbrB domains follow at residues His7–Glu60 and Ser83–Arg126. The tract at residues Leu141–Glu164 is disordered. A compositionally biased stretch (pro residues) spans Ala154 to Glu164.

It belongs to the MraZ family. In terms of assembly, forms oligomers.

It is found in the cytoplasm. It localises to the nucleoid. In Beijerinckia indica subsp. indica (strain ATCC 9039 / DSM 1715 / NCIMB 8712), this protein is Transcriptional regulator MraZ.